The sequence spans 179 residues: Inner membrane-spanning protein YciB (179 aa).

5 helical membrane-spanning segments follow: residues 22–42, 50–70, 76–96, 121–141, and 149–169; these read IYAATAALIVATAIVLIYSWV, MALITFVLVVVFGGLTLFFHN, WKVTVIYALFAGALLVSQWVM, LAWAVFFILCGLANIYIAFWL, and FKVFGLTALTLIFTLLSGVYI.

This sequence belongs to the YciB family.

It localises to the cell inner membrane. Its function is as follows. Plays a role in cell envelope biogenesis, maintenance of cell envelope integrity and membrane homeostasis. The sequence is that of Inner membrane-spanning protein YciB from Escherichia fergusonii (strain ATCC 35469 / DSM 13698 / CCUG 18766 / IAM 14443 / JCM 21226 / LMG 7866 / NBRC 102419 / NCTC 12128 / CDC 0568-73).